We begin with the raw amino-acid sequence, 430 residues long: Type 3 secretion system ATPase (430 aa).

162–167 (GCGKTF) provides a ligand contact to ATP.

The protein belongs to the ATPase alpha/beta chains family. T3SS ATPase subfamily. As to quaternary structure, the core secretion machinery of the T3SS is composed of approximately 20 different proteins, including cytoplasmic components, a base, an export apparatus and a needle. This subunit is part of the cytosolic complex. Forms homohexamers. Interacts directly with MxiN/SctL (stator protein) and Spa13/SctO (stalk protein). Can form a soluble complex with Spa33/SctQ, MxiN/SctL and MxiK/SctK.

The protein localises to the cytoplasm. It carries out the reaction ATP + H2O + cellular proteinSide 1 = ADP + phosphate + cellular proteinSide 2.. With respect to regulation, oligomerization increases ATPase activity. Monomeric forms exhibit low-level ATPase activity by forming short-lived oligomers with active site contributions from at least two protomers. In contrast, oligomers exhibit enhanced ATP hydrolysis rates that likely result from multiple preformed active sites within the oligomeric complex. Oligomerization is important for both enzyme activation and T3SS function. Activity is regulated by MxiN/SctL, which differentially regulates the activity of the monomer and the oligomer: it up-regulates the ATPase activity of the monomer, while it down-regulates the activity of the oligomer. In terms of biological role, ATPase component of the type III secretion system (T3SS), also called injectisome, which is used to inject bacterial effector proteins into eukaryotic host cells. Acts as a molecular motor to provide the energy that is required for the export of proteins. Required for type III secretion apparatus (T3SA) formation, proper protein secretion, host cell invasion and virulence. May play a critical role in T3SS substrate recognition, disassembly of the effector/chaperone complex and unfolding of the effector in an ATP-dependent manner prior to secretion. The polypeptide is Type 3 secretion system ATPase (Shigella flexneri).